The following is a 455-amino-acid chain: MLKIYNTLARAKQTFSPIIPGKVSMYVCGMTVYDYCHLGHARVMVVFDMVNRWLRSSGYEVTYVRNITDIDDKIIARANENGETINALTDRFIAAMNEDAARLGVWRPDLEPRATDYIHEMIAMIVALIEKHHAYAADNGDVYYAVSSFASYGKLSGKSLEDLRAGERVEVDAHKRDPMDFVLWKAAKPGEPSWDSPWGPGRPGWHIECSAMGARHLGPHFDIHGGGQDLQFPHHENEIAQSEGAHGCTFVNYWMHNGFIRVDDEKMSKSLGNFFTIREVLEKYDAEVVRFFILRAHYRSPLNYSSHHLDDAKQALTRLYNTLRGRELPQLDIDWRQPEAERFKQALDDDFNTPEAFAVLFELASEANRTGSAVQAALLKALAGQLGLLQRDPDEFLKGEAVAGLSPDEIERLIAERLAARKCKNFAEADRIRDALTAQGIILEDTPQGTSWRRS.

Residue Cys28 participates in Zn(2+) binding. The short motif at 30 to 40 (MTVYDYCHLGH) is the 'HIGH' region element. 3 residues coordinate Zn(2+): Cys209, His234, and Glu238. A 'KMSKS' region motif is present at residues 266 to 270 (KMSKS). An ATP-binding site is contributed by Lys269.

Belongs to the class-I aminoacyl-tRNA synthetase family. In terms of assembly, monomer. The cofactor is Zn(2+).

Its subcellular location is the cytoplasm. It carries out the reaction tRNA(Cys) + L-cysteine + ATP = L-cysteinyl-tRNA(Cys) + AMP + diphosphate. The protein is Cysteine--tRNA ligase of Methylobacillus flagellatus (strain ATCC 51484 / DSM 6875 / VKM B-1610 / KT).